The primary structure comprises 618 residues: Dihydroxy-acid dehydratase (618 aa).

Aspartate 81 provides a ligand contact to Mg(2+). Cysteine 122 provides a ligand contact to [2Fe-2S] cluster. Aspartate 123 and lysine 124 together coordinate Mg(2+). At lysine 124 the chain carries N6-carboxylysine. Cysteine 199 serves as a coordination point for [2Fe-2S] cluster. Glutamate 495 is a Mg(2+) binding site. The active-site Proton acceptor is the serine 521.

This sequence belongs to the IlvD/Edd family. In terms of assembly, homodimer. [2Fe-2S] cluster serves as cofactor. Requires Mg(2+) as cofactor.

It catalyses the reaction (2R)-2,3-dihydroxy-3-methylbutanoate = 3-methyl-2-oxobutanoate + H2O. The enzyme catalyses (2R,3R)-2,3-dihydroxy-3-methylpentanoate = (S)-3-methyl-2-oxopentanoate + H2O. The protein operates within amino-acid biosynthesis; L-isoleucine biosynthesis; L-isoleucine from 2-oxobutanoate: step 3/4. It participates in amino-acid biosynthesis; L-valine biosynthesis; L-valine from pyruvate: step 3/4. Functionally, functions in the biosynthesis of branched-chain amino acids. Catalyzes the dehydration of (2R,3R)-2,3-dihydroxy-3-methylpentanoate (2,3-dihydroxy-3-methylvalerate) into 2-oxo-3-methylpentanoate (2-oxo-3-methylvalerate) and of (2R)-2,3-dihydroxy-3-methylbutanoate (2,3-dihydroxyisovalerate) into 2-oxo-3-methylbutanoate (2-oxoisovalerate), the penultimate precursor to L-isoleucine and L-valine, respectively. The protein is Dihydroxy-acid dehydratase of Blochmanniella floridana.